The following is a 414-amino-acid chain: Solute carrier family 25 member 46-B (414 aa).

A compositionally biased stretch (basic and acidic residues) spans 1 to 13 (MQPRRPDRFDGLE). A disordered region spans residues 1-89 (MQPRRPDRFD…AFGEENSGSS (89 aa)). Residues 29–50 (YQSSFPARSLSSSGDLSQQWVT) show a composition bias toward polar residues. A Solcar 1 repeat occupies 92-183 (QVNRFAGFGI…GMLSEFTHLP (92 aa)). 6 helical membrane passes run 99–119 (FGIG…CIVL), 159–179 (MGST…LSEF), 198–218 (HLLL…ASLI), 254–274 (LLPL…HYII), 310–330 (FPEL…LYPL), and 379–399 (LGFY…AIVL). The stretch at 307–412 (EDYFPELLAN…KIIYSSVVQT (106 aa)) is one Solcar 2 repeat.

The protein belongs to the mitochondrial carrier (TC 2.A.29) family.

It localises to the mitochondrion outer membrane. Functionally, may play a role in mitochondrial dynamics by controlling mitochondrial membrane fission. This Xenopus laevis (African clawed frog) protein is Solute carrier family 25 member 46-B (slc25a46-b).